Reading from the N-terminus, the 279-residue chain is MRAAGQLLRACSQTWKSVRMASTGVERRKPLENKVALVTASTDGIGLAIARRLAQDGAHVVVSSRKQENVDRTVATLQGEGLSVTGTVCHVGKAEDRERLVAMAVNLHGGVDILVSNAAVNPFFGNIIDATEEVWDKILHVNVKATVLMTKAVVPEMEKRGGGSVLIVSSVGAYHPFPNLGPYNVSKTALLGLTKNLAVELAPRNIRVNCLAPGLIKTNFSQVLWMDKARKEYMKESLRIRRLGNPEDCAGIVSFLCSEDASYITGETVVVGGGTASRL.

NADP(+) is bound at residue 37 to 61 (LVTASTDGIGLAIARRLAQDGAHVV). Lysine 93 carries the N6-acetyllysine; alternate modification. Lysine 93 bears the N6-succinyllysine; alternate mark. A substrate-binding site is contributed by serine 170. The Proton acceptor role is filled by tyrosine 183. Lysine 187 is a binding site for NADP(+). Lysine 217 carries the N6-acetyllysine; alternate modification. Residue lysine 217 is modified to N6-succinyllysine; alternate. Position 221 is a phosphoserine (serine 221). An N6-succinyllysine mark is found at lysine 228 and lysine 235. Residues 277-279 (SRL) carry the Peroxisomal targeting signal motif.

This sequence belongs to the short-chain dehydrogenases/reductases (SDR) family. Homotetramer. Detected in heart, kidney, liver and small intestine. Detected at lower levels in brain, lung, stomach and spleen.

Its subcellular location is the peroxisome. It carries out the reaction a secondary alcohol + NADP(+) = a ketone + NADPH + H(+). The enzyme catalyses 3alpha-hydroxy-5beta-pregnan-20-one + NADP(+) = 5beta-pregnan-3,20-dione + NADPH + H(+). It catalyses the reaction 5beta-dihydrotestosterone + NADPH + H(+) = 5beta-androstane-3alpha,17beta-diol + NADP(+). The catalysed reaction is all-trans-retinol + NADP(+) = all-trans-retinal + NADPH + H(+). It carries out the reaction isatin + NADPH + H(+) = 3-hydroxyindolin-2-one + NADP(+). Its activity is regulated as follows. Inhibited by kaempferol, quercetin, genistein and myristic acid. Functionally, NADPH-dependent oxidoreductase which catalyzes the reduction of a variety of compounds bearing carbonyl groups including ketosteroids, alpha-dicarbonyl compounds, aldehydes, aromatic ketones and quinones. Reduces all-trans-retinal and 9-cis retinal. Reduces 3-ketosteroids and benzil into 3alpha-hydroxysteroids and S-benzoin, respectively, in contrast to the stereoselectivity of primates DHRS4s which produce 3beta-hydroxysteroids and R-benzoin. In the reverse reaction, catalyzes the NADP-dependent oxidation of 3alpha-hydroxysteroids and alcohol, but with much lower efficiency. Involved in the metabolism of 3alpha-hydroxysteroids, retinoid, isatin and xenobiotic carbonyl compounds. This is Dehydrogenase/reductase SDR family member 4 (DHRS4) from Sus scrofa (Pig).